A 159-amino-acid polypeptide reads, in one-letter code: Probable cyclic pyranopterin monophosphate synthase (159 aa).

Substrate-binding positions include 75 to 77 (LCH) and 111 to 112 (ME). D126 is an active-site residue.

This sequence belongs to the MoaC family. Homohexamer; trimer of dimers.

It catalyses the reaction (8S)-3',8-cyclo-7,8-dihydroguanosine 5'-triphosphate = cyclic pyranopterin phosphate + diphosphate. Its pathway is cofactor biosynthesis; molybdopterin biosynthesis. In terms of biological role, catalyzes the conversion of (8S)-3',8-cyclo-7,8-dihydroguanosine 5'-triphosphate to cyclic pyranopterin monophosphate (cPMP). The polypeptide is Probable cyclic pyranopterin monophosphate synthase (Pyrococcus abyssi (strain GE5 / Orsay)).